Reading from the N-terminus, the 360-residue chain is Phospho-N-acetylmuramoyl-pentapeptide-transferase (360 aa).

Transmembrane regions (helical) follow at residues 25 to 45, 73 to 93, 97 to 117, 134 to 154, 168 to 188, 199 to 219, 236 to 256, 263 to 283, 288 to 308, and 338 to 358; these read RGIL…PWMI, TMGG…WADL, YVWV…VDDY, YFWQ…TAPT, LAIP…VGSS, GLAI…CYLS, AGEL…FLWF, VFMG…IAVI, VVLF…VIQV, and VIVR…ATLK.

This sequence belongs to the glycosyltransferase 4 family. MraY subfamily. It depends on Mg(2+) as a cofactor.

It is found in the cell inner membrane. The catalysed reaction is UDP-N-acetyl-alpha-D-muramoyl-L-alanyl-gamma-D-glutamyl-meso-2,6-diaminopimeloyl-D-alanyl-D-alanine + di-trans,octa-cis-undecaprenyl phosphate = di-trans,octa-cis-undecaprenyl diphospho-N-acetyl-alpha-D-muramoyl-L-alanyl-D-glutamyl-meso-2,6-diaminopimeloyl-D-alanyl-D-alanine + UMP. Its pathway is cell wall biogenesis; peptidoglycan biosynthesis. In terms of biological role, catalyzes the initial step of the lipid cycle reactions in the biosynthesis of the cell wall peptidoglycan: transfers peptidoglycan precursor phospho-MurNAc-pentapeptide from UDP-MurNAc-pentapeptide onto the lipid carrier undecaprenyl phosphate, yielding undecaprenyl-pyrophosphoryl-MurNAc-pentapeptide, known as lipid I. The polypeptide is Phospho-N-acetylmuramoyl-pentapeptide-transferase (Pseudomonas entomophila (strain L48)).